Consider the following 413-residue polypeptide: MAFKSIAVLSACIIVGSALPVDKYPVLKDQPAEVLFRENNPTVLECIIEGNDQGVKYSWKKDGKSYNWQEHNAALRKDEGSLVFLRPQASDEGHYQCFAETPAGVASSRVISFRKTYLIASPAKTHEKTPIEGRPFQLDCVLPNAYPKPLITWKKRLSGADPNADVTDFDRRITAGPDGNLYFTIVTKEDVSDIYKYVCTAKNAAVDEEVVLVEYEIKGVTKDNSGYKGEPVPQYVSKDMMAKAGDVTMIYCMYGSNPMGYPNYFKNGKDVNGNPEDRITRHNRTSGKRLLFKTTLPEDEGVYTCEVDNGVGKPQKHSLKLTVVSAPKYEQKPEKVIVVKQGQDVTIPCKVTGLPAPNVVWSHNAKPLSGGRATVTDSGLVIKGVKNGDKGYYGCRATNEHGDKYFETLVQVN.

An N-terminal signal peptide occupies residues 1–19 (MAFKSIAVLSACIIVGSAL). Ig-like C2-type domains lie at 25–112 (PVLK…RVIS), 122–211 (PAKT…EEVV), 233–322 (PQYV…LKLT), and 327–413 (PKYE…VQVN). Cystine bridges form between C46-C97, C140-C199, C252-C305, and C349-C395. The N-linked (GlcNAc...) asparagine glycan is linked to N283.

It belongs to the hemolin family. As to expression, hemolymph.

It is found in the secreted. It localises to the extracellular space. Its function is as follows. Insect-immune protein. Forms a protein complex at the bacterial surface. Can inhibit hemocyte aggregation. This is Hemolin from Hyalophora cecropia (Cecropia moth).